The sequence spans 310 residues: MSENRIRIATRKSPLAMWQAEFVKAELERIHPGIVVELLPMSTKGDVILDTPLAKVGGKGLFVKELEVAMLDDLADIAVHSMKDVPVDFPEGLGLEVICEREDPRDAFVSNLYKSISELPLGATVGTSSLRRQCQIRASRPDLIIKDLRGNVGTRLAKLDNGEYDAIILAAAGLIRLKLSERIASFISAEESLPANGQGAVGIECRINDERVKALLAPLEHLETRYRVLAERAMNTRLEGGCQVPIGAFAEIDGDEMTLRGLVGNPDGSEIIEGVITGPKTEATQLGVALAEELLSKGAKSILDAVYAKA.

Cys-242 carries the post-translational modification S-(dipyrrolylmethanemethyl)cysteine.

It belongs to the HMBS family. Monomer. Dipyrromethane is required as a cofactor.

The catalysed reaction is 4 porphobilinogen + H2O = hydroxymethylbilane + 4 NH4(+). It functions in the pathway porphyrin-containing compound metabolism; protoporphyrin-IX biosynthesis; coproporphyrinogen-III from 5-aminolevulinate: step 2/4. Tetrapolymerization of the monopyrrole PBG into the hydroxymethylbilane pre-uroporphyrinogen in several discrete steps. This chain is Porphobilinogen deaminase, found in Shewanella baltica (strain OS223).